Consider the following 94-residue polypeptide: MIKSELVQIIATRNPHLFLRDVENIVGAIFDEITDALAEGNRVELRGFGAFSVKNRPARTGRNPRTGESVEVEEKWVPFFKTGKELRERLNGGK.

This sequence belongs to the bacterial histone-like protein family. Heterodimer of an alpha and a beta chain.

Functionally, this protein is one of the two subunits of integration host factor, a specific DNA-binding protein that functions in genetic recombination as well as in transcriptional and translational control. The polypeptide is Integration host factor subunit beta (Mesorhizobium japonicum (strain LMG 29417 / CECT 9101 / MAFF 303099) (Mesorhizobium loti (strain MAFF 303099))).